The primary structure comprises 569 residues: TBCC domain-containing protein 1 (569 aa).

A C-CAP/cofactor C-like domain is found at 304 to 435 (PRSHRIVVMS…LEDHMARTGL (132 aa)).

The protein belongs to the TBCC family.

Its subcellular location is the cytoplasm. It localises to the cytoskeleton. The protein localises to the microtubule organizing center. The protein resides in the centrosome. It is found in the spindle pole. Its function is as follows. Plays a role in the regulation of centrosome and Golgi apparatus positioning, with consequences on cell shape and cell migration. This Rattus norvegicus (Rat) protein is TBCC domain-containing protein 1 (Tbccd1).